The chain runs to 359 residues: UDP-N-acetylglucosamine--N-acetylmuramyl-(pentapeptide) pyrophosphoryl-undecaprenol N-acetylglucosamine transferase (359 aa).

UDP-N-acetyl-alpha-D-glucosamine contacts are provided by residues 15 to 17 (TGG), asparagine 127, arginine 166, serine 191, isoleucine 245, 264 to 269 (ALTVSE), and glutamine 290.

This sequence belongs to the glycosyltransferase 28 family. MurG subfamily.

It is found in the cell inner membrane. It catalyses the reaction di-trans,octa-cis-undecaprenyl diphospho-N-acetyl-alpha-D-muramoyl-L-alanyl-D-glutamyl-meso-2,6-diaminopimeloyl-D-alanyl-D-alanine + UDP-N-acetyl-alpha-D-glucosamine = di-trans,octa-cis-undecaprenyl diphospho-[N-acetyl-alpha-D-glucosaminyl-(1-&gt;4)]-N-acetyl-alpha-D-muramoyl-L-alanyl-D-glutamyl-meso-2,6-diaminopimeloyl-D-alanyl-D-alanine + UDP + H(+). It participates in cell wall biogenesis; peptidoglycan biosynthesis. Cell wall formation. Catalyzes the transfer of a GlcNAc subunit on undecaprenyl-pyrophosphoryl-MurNAc-pentapeptide (lipid intermediate I) to form undecaprenyl-pyrophosphoryl-MurNAc-(pentapeptide)GlcNAc (lipid intermediate II). The chain is UDP-N-acetylglucosamine--N-acetylmuramyl-(pentapeptide) pyrophosphoryl-undecaprenol N-acetylglucosamine transferase from Pseudomonas putida (strain GB-1).